A 347-amino-acid polypeptide reads, in one-letter code: MKLGISAYGAYVPQYRIKVEEIAKVWGDDADDYRNGLMVSEKSVPDVDEDTATIAVEAARNAIARGADPKKIGAIYVGSESHPYAVKPTATIVAAAIGAPNRMTAADFEFACKAGTAAIQTSMGVVASGLAETALAIGADTSQGAPGDALEYTAAAGGAAFVISKNDHIAVINHTCSFTSDTPDFWRREGADYPRHGGRFTGDPGYFKHVLSASRMMLECQGTKPSDYNYAVFHQPNGKFPTRAALTLGFKKEQLSPGLTCPMMGNTYSGASMVGLSAVLDIAKPGERIFVTSFGSGAGSDSFDITVTDRITEVQDLAPKTWDYIKKAKYLDYASYARHKGKINTDN.

(3S)-3-hydroxy-3-methylglutaryl-CoA contacts are provided by D29 and A30. E80 functions as the Proton donor/acceptor in the catalytic mechanism. Positions 112 and 153 each coordinate (3S)-3-hydroxy-3-methylglutaryl-CoA. C112 acts as the Acyl-thioester intermediate in catalysis. CoA is bound at residue R199. Positions 201 and 234 each coordinate (3S)-3-hydroxy-3-methylglutaryl-CoA. H234 serves as the catalytic Proton donor/acceptor. K239 is a CoA binding site. (3S)-3-hydroxy-3-methylglutaryl-CoA is bound by residues R243, N266, and S296.

This sequence belongs to the thiolase-like superfamily. Archaeal HMG-CoA synthase family. Interacts with acetoacetyl-CoA thiolase that catalyzes the precedent step in the pathway and with a DUF35 protein. The acetoacetyl-CoA thiolase/HMG-CoA synthase complex channels the intermediate via a fused CoA-binding site, which allows for efficient coupling of the endergonic thiolase reaction with the exergonic HMGCS reaction.

The enzyme catalyses acetoacetyl-CoA + acetyl-CoA + H2O = (3S)-3-hydroxy-3-methylglutaryl-CoA + CoA + H(+). It functions in the pathway metabolic intermediate biosynthesis; (R)-mevalonate biosynthesis; (R)-mevalonate from acetyl-CoA: step 2/3. Catalyzes the condensation of acetyl-CoA with acetoacetyl-CoA to form 3-hydroxy-3-methylglutaryl-CoA (HMG-CoA). Functions in the mevalonate (MVA) pathway leading to isopentenyl diphosphate (IPP), a key precursor for the biosynthesis of isoprenoid compounds that are building blocks of archaeal membrane lipids. In Methanocella arvoryzae (strain DSM 22066 / NBRC 105507 / MRE50), this protein is Hydroxymethylglutaryl-CoA synthase.